The primary structure comprises 1131 residues: Protein TOPLESS (1131 aa).

The LisH domain maps to 4–36; it reads LSRELVFLILQFLDEEKFKETVHKLEQESGFFF. Residues 34 to 92 enclose the CTLH domain; the sequence is FFFNMKYFEDEVHNGNWDEVEKYLSGFTKVDDNRYSMKIFFEIRKQKYLEALDKHDRPK. Position 214 is a phosphoserine (Ser214). The tract at residues 286–305 is disordered; it reads TPPTNASLDYPSADSEHVSK. WD repeat units follow at residues 353–393, 415–454, 460–501, 504–545, 548–591, 595–634, 639–678, 710–756, 766–805, 833–871, 874–914, 917–956, 967–1005, 1010–1049, and 1060–1102; these read SQGS…RLVQ, EPVV…DMRQ, AHVG…KRHT, GHEA…SRVD, APGR…VKRT, FHKR…LLTA, GGLQ…RLLH, DRSA…EPSQ, LRVA…RNAT, NPEE…TMAT, PPPP…VKSK, GHSK…KQRS, NSAP…CMKQ, ESLA…LRCR, and LSNS…GKWG. A disordered region spans residues 1100-1131; sequence KWGVAPPAENGSASGAPTAPSVGASASDQPQR.

Tetramer. Homodimer. Interacts (via the LisH domain) with WUS (via the C-terminal domain). Interacts with NINJA/AFPH2. Interacts with IAA1; IAA2; IAA3; IAA4; IAA6; IAA8; IAA9; IAA11; IAA13; IAA14; IAA17; IAA18; IAA26; IAA27 and IAA28. Interacts (via the LisH domain) with IAA12/BDL (via domain I). Can form a complex with IAA12 and ARF5. Interacts with AP2 (via EAR motif) and HDA19. Interacts with TIFY5A/JAZ8 (via EAR motif). Interacts with SPEAR3/TIE1. Interacts with SPL (via EAR motif). Interacts with ZAT2 and ZAT3 (via the EAR motif). Interacts with JAZ13 (via EAR motif). Interacts with GIR1 and GIR2. In terms of tissue distribution, expressed in embryo and in extraembryonic tissues. Expressed in inflorescences, flowers, floral meristems, developing anthers and ovules. Detected in the vascular tissues, shoot apical meristem, cotyledons and young leaves. Expressed ubiquitously in the pistils, stamens and pollens.

It localises to the nucleus. Its function is as follows. Transcriptional corepressor. May repress the expression of root-promoting genes in the top half of the embryo to allow proper differentiation of the shoot pole during the transition stage of embryogenesis. Regulates the expression of PLT1 and PLT2. Negative regulator of jasmonate responses. Negative regulator of auxin responses. Negative regulator of multiple floral organ identity genes. Required for ovule development. This Arabidopsis thaliana (Mouse-ear cress) protein is Protein TOPLESS (TPL).